The primary structure comprises 473 residues: Uronate isomerase (473 aa).

Belongs to the metallo-dependent hydrolases superfamily. Uronate isomerase family.

The enzyme catalyses D-glucuronate = D-fructuronate. It catalyses the reaction aldehydo-D-galacturonate = keto-D-tagaturonate. It participates in carbohydrate metabolism; pentose and glucuronate interconversion. The sequence is that of Uronate isomerase (uxaC) from Geobacillus stearothermophilus (Bacillus stearothermophilus).